The chain runs to 288 residues: Nucleotide-binding protein AHA_3920 (288 aa).

8–15 (GRSGSGKT) contacts ATP. 56–59 (DVRN) provides a ligand contact to GTP.

This sequence belongs to the RapZ-like family.

Its function is as follows. Displays ATPase and GTPase activities. The sequence is that of Nucleotide-binding protein AHA_3920 from Aeromonas hydrophila subsp. hydrophila (strain ATCC 7966 / DSM 30187 / BCRC 13018 / CCUG 14551 / JCM 1027 / KCTC 2358 / NCIMB 9240 / NCTC 8049).